Reading from the N-terminus, the 594-residue chain is UvrABC system protein C (594 aa).

The region spanning 14-91 (DQPGCYLMKD…IKKHDPKYNI (78 aa)) is the GIY-YIG domain. The UVR domain maps to 196-231 (KEVRSELETKMYEASEKLEFERAKELRDQIAHIDAI).

The protein belongs to the UvrC family. In terms of assembly, interacts with UvrB in an incision complex.

The protein localises to the cytoplasm. The UvrABC repair system catalyzes the recognition and processing of DNA lesions. UvrC both incises the 5' and 3' sides of the lesion. The N-terminal half is responsible for the 3' incision and the C-terminal half is responsible for the 5' incision. The sequence is that of UvrABC system protein C from Bacillus cereus (strain Q1).